A 202-amino-acid polypeptide reads, in one-letter code: Pectinesterase inhibitor 11 (202 aa).

Positions 1-21 (MAKQIFYTLFLFLLSTAILTA) are cleaved as a signal peptide. C43 and C52 are disulfide-bonded. Residue N76 is glycosylated (N-linked (GlcNAc...) asparagine). A disulfide bridge connects residues C109 and C160.

Belongs to the PMEI family.

The protein localises to the secreted. It localises to the extracellular space. The protein resides in the apoplast. Functionally, pectin methylesterase (PME) inhibitor involved in the maintenance of cell wall integrity in response to necrotrophic pathogens. Modulates PME activity and pectin methylesterification during infection by Botrytis cinerea and contributes to resistance against the pathogen. This Arabidopsis thaliana (Mouse-ear cress) protein is Pectinesterase inhibitor 11.